Consider the following 1009-residue polypeptide: MPESVIAGIPVHFPFEPYNVQRDYMEKVIICLRDGTNGVLESPTGTGKTLSLLCASLAWIRTRQSEHQQQMIKLKATSKEGGPGSGPGGDLSELAMTVGQANNWGVPKVIYASRTHSQLNQAMRELKRTAYANMRSVVLGSRDQLCIHPEVMKEQGNSNKVNLCKLRVHSKTCTFQLRVESKKDHPDFRGPSIMDIEDLVRVGQKLKMCPYYASKELVAQADITFMPYNYLLDPKARKANKIELGNTIIILDEAHNIEKICEESASVQIRSSDVAMAIEDVTHIMKVFTSGESQEAGGDEPKDFTLDDLTLLKEMLLELEKAIDAVVVDNPTDGTTYPASLMYELLGKANFTYGNCATIVALLDKLVQYLMVASQHMTIRKGGTFTMLSDLLTIVFANKENIMSKVHLSFKVHVQVEESNKQQGKSGAIQGKQQGWLGKGNITTTGTSSKAAKIVNFWCFNPGFGMEQLLNTQVRSVILTSGTLAPLKPLIAELAIPVAQHLENPHIVDQSQVYVKIIGTGPDRQQLISNFKNRDNPKYISSLGQTILNVARIVPDGLLVFFPSYPMLNKCVDAWQASGLWADISCKKPIFVEPRGKDQFTSTMEEFYQAIRDSKGAVFMAVCRGKVSEGLDFADRNGRAVIITGLPFPPLKDPKVILKRRYLETNRTKENQLLSGQEWYNLDATRAVNQAIGRVIRHRNDYGAILLCDSRFQDASQVQQLSKWIRGHLGARPQSSPFGPIVRELRQFFKHAEETMKQPDVREEEQPLMNVCKVEEVGTQPVIPTIKQEPGNNATFRKANKSAIKVEMANSINSWTPADYASAAGRTLGKAAPNAMDFMSRLDSNVSSIDFNCSGSADSGSGGCGSSSLVTIHKRERSSPGVTDTVATQTTKKRYKLAENIKTEPKSNSSQQVKVAPESRADFLRELRSLISQDQFRDFGKVLIEYRSGTDENFESLMTVLLDVLAAPKMRYLFIGMRRFLRNEHKAEFDVRLASLNLAQESSPNKRIP.

The Helicase ATP-binding domain occupies 7–322; it reads AGIPVHFPFE…KEMLLELEKA (316 aa). 42–49 contacts ATP; the sequence is SPTGTGKT. C146, C164, C173, and C209 together coordinate [4Fe-4S] cluster. A DEAH box motif is present at residues 252-255; the sequence is DEAH.

Belongs to the helicase family. RAD3/XPD subfamily.

Its subcellular location is the nucleus. The enzyme catalyses ATP + H2O = ADP + phosphate + H(+). In terms of biological role, a probable ATP-dependent DNA helicase implicated in DNA repair and the maintenance of genomic stability. Acts as an anti-recombinase to counteract toxic recombination and limit crossover during meiosis. Regulates meiotic recombination and crossover homeostasis by physically dissociating strand invasion events and thereby promotes noncrossover repair by meiotic synthesis dependent strand annealing (SDSA) as well as disassembly of D loop recombination intermediates. This chain is Regulator of telomere elongation helicase 1 homolog, found in Drosophila persimilis (Fruit fly).